We begin with the raw amino-acid sequence, 368 residues long: Endophilin-A2 (368 aa).

A membrane-binding amphipathic helix region spans residues Met1–Val21. Residues Ser18–Ser249 form the BAR domain. The interval Pro60–Pro87 is required for dimerization upon membrane association. Positions Asn145–Arg250 form a coiled coil. The interaction with ARC stretch occupies residues Leu218–Glu254. The segment at Met244–Gln308 is disordered. Basic and acidic residues predominate over residues Arg245 to Phe263. Phosphoserine occurs at positions 288 and 292. Thr298 is modified (phosphothreonine). One can recognise an SH3 domain in the interval Leu306–Pro365. Phosphotyrosine is present on Tyr315.

This sequence belongs to the endophilin family. Interacts with ARC. Interacts with SYNJ1 and DNM1. Interacts with PDCD6IP. Interacts with BIN2. In terms of tissue distribution, ubiquitous. Higher expression in pancreas, placenta, prostate, testis and uterus.

The protein resides in the cytoplasm. Its subcellular location is the early endosome membrane. It is found in the cell projection. It localises to the podosome. Implicated in endocytosis. May recruit other proteins to membranes with high curvature. In Homo sapiens (Human), this protein is Endophilin-A2 (SH3GL1).